Consider the following 162-residue polypeptide: Succinate dehydrogenase assembly factor 2, mitochondrial (162 aa).

The N-terminal 35 residues, 1-35 (MHNMFPALTKTLSLQGYKIINSQTGSAAWSCGRRW), are a transit peptide targeting the mitochondrion.

Belongs to the SDHAF2 family. Interacts with the flavoprotein subunit within the SDH catalytic dimer.

The protein localises to the mitochondrion matrix. Its function is as follows. Plays an essential role in the assembly of succinate dehydrogenase (SDH), an enzyme complex (also referred to as respiratory complex II) that is a component of both the tricarboxylic acid (TCA) cycle and the mitochondrial electron transport chain, and which couples the oxidation of succinate to fumarate with the reduction of ubiquinone (coenzyme Q) to ubiquinol. Required for flavinylation (covalent attachment of FAD) of the flavoprotein subunit of the SDH catalytic dimer. The polypeptide is Succinate dehydrogenase assembly factor 2, mitochondrial (Saccharomyces cerevisiae (strain RM11-1a) (Baker's yeast)).